A 424-amino-acid chain; its full sequence is Histidine--tRNA ligase (424 aa).

This sequence belongs to the class-II aminoacyl-tRNA synthetase family. In terms of assembly, homodimer.

It localises to the cytoplasm. The catalysed reaction is tRNA(His) + L-histidine + ATP = L-histidyl-tRNA(His) + AMP + diphosphate + H(+). This is Histidine--tRNA ligase from Salmonella typhi.